The primary structure comprises 233 residues: Orotidine 5'-phosphate decarboxylase (233 aa).

Residues D11, K34, D61–T70, T117, R179, Q188, G208, and R209 each bind substrate. Catalysis depends on K63, which acts as the Proton donor.

This sequence belongs to the OMP decarboxylase family. Type 1 subfamily. Homodimer.

The catalysed reaction is orotidine 5'-phosphate + H(+) = UMP + CO2. Its pathway is pyrimidine metabolism; UMP biosynthesis via de novo pathway; UMP from orotate: step 2/2. Functionally, catalyzes the decarboxylation of orotidine 5'-monophosphate (OMP) to uridine 5'-monophosphate (UMP). The sequence is that of Orotidine 5'-phosphate decarboxylase from Streptococcus pneumoniae (strain CGSP14).